Consider the following 37-residue polypeptide: Potassium channel toxin alpha-KTx 4.8 (37 aa).

Intrachain disulfides connect C13/C33 and C17/C35.

Belongs to the short scorpion toxin superfamily. Potassium channel inhibitor family. Alpha-KTx 04 subfamily. As to expression, expressed by the venom gland.

It localises to the secreted. Reversible blocker of voltage-gated potassium channel Kv1.2/KCNA2 (Kd=65 nM) and calcium-activated potassium channels KCa2.2/KCNN2 (Kd=575 nM) and KCa3.1/KCNN4 (Kd=59 nM). In Centruroides margaritatus (Central American bark Scorpion), this protein is Potassium channel toxin alpha-KTx 4.8.